A 458-amino-acid polypeptide reads, in one-letter code: Ammonium transporter Rh type B (458 aa).

Residues 1 to 13 are Cytoplasmic-facing; sequence MAGSPSRAAGRRL. Residues 14–34 form a helical membrane-spanning segment; that stretch reads QLPLLCLFLQGATAVLFAVFV. Over 35-61 the chain is Extracellular; that stretch reads RYNHKTDAALWHRSNHSNADNEFYFRY. N-linked (GlcNAc...) asparagine glycosylation is present at N49. Residues 62–82 traverse the membrane as a helical segment; the sequence is PSFQDVHAMVFVGFGFLMVFL. The Cytoplasmic segment spans residues 83–86; that stretch reads QRYG. Residues 87–107 form a helical membrane-spanning segment; it reads FSSVGFTFLLAAFALQWSTLV. The Extracellular portion of the chain corresponds to 108-124; the sequence is QGFLHSFHGGHIHVGVE. The chain crosses the membrane as a helical span at residues 125–145; sequence SMINADFCAGAVLISFGAVLG. The Cytoplasmic portion of the chain corresponds to 146–149; sequence KTGP. The chain crosses the membrane as a helical span at residues 150–170; sequence TQLLLMALLEVVLFGINEFVL. Over 171–178 the chain is Extracellular; sequence LHLLGVRD. The helical transmembrane segment at 179 to 201 threads the bilayer; the sequence is AGGSMTIHTFGAYFGLVLSRVLY. The Cytoplasmic portion of the chain corresponds to 202-219; sequence RPQLEKSKHRQGSVYHSD. Residues 220-240 traverse the membrane as a helical segment; it reads LFAMIGTIFLWIFWPSFNAAL. Over 241 to 251 the chain is Extracellular; that stretch reads TALGAGQHRTA. A helical membrane pass occupies residues 252–272; it reads LNTYYSLAASTLGTFALSALV. Residues 273–282 are Cytoplasmic-facing; the sequence is GEDGRLDMVH. A helical membrane pass occupies residues 283–303; that stretch reads IQNAALAGGVVVGTSSEMMLT. Position 304 (P304) is a topological domain, extracellular. A helical membrane pass occupies residues 305 to 325; it reads FGALAAGFLAGTVSTLGYKFF. Over 326 to 346 the chain is Cytoplasmic; it reads TPILESKFKVQDTCGVHNLHG. A helical membrane pass occupies residues 347-367; that stretch reads MPGVLGALLGVLVAGLATHEA. At 368–393 the chain is on the extracellular side; the sequence is YGDGLESVFPLIAEGQRSATSQAMHQ. Residues 394-414 traverse the membrane as a helical segment; sequence LFGLFVTLMFASVGGGLGGLL. The Cytoplasmic segment spans residues 415–458; it reads LKLPFLDSPPDSQHYEDQVHWQVPGEHEDKAQRPLRVEEADTQA. The interaction with ANK3 stretch occupies residues 416 to 424; that stretch reads KLPFLDSPP. Positions 436–458 are disordered; the sequence is QVPGEHEDKAQRPLRVEEADTQA.

This sequence belongs to the ammonium transporter (TC 2.A.49) family. Rh subfamily. As to quaternary structure, interacts (via C-terminus) with ANK2 and ANK3; required for targeting to the basolateral membrane. N-glycosylated. Specifically expressed in kidney. Also detected in liver and ovary.

It is found in the cell membrane. Its subcellular location is the basolateral cell membrane. It catalyses the reaction NH4(+)(in) = NH4(+)(out). The catalysed reaction is methylamine(out) = methylamine(in). The enzyme catalyses CO2(out) = CO2(in). In terms of biological role, ammonium transporter involved in the maintenance of acid-base homeostasis. Transports ammonium and its related derivative methylammonium across the basolateral plasma membrane of epithelial cells likely contributing to renal transepithelial ammonia transport and ammonia metabolism. May transport either NH4(+) or NH3 ammonia species predominantly mediating an electrogenic NH4(+) transport. May act as a CO2 channel providing for renal acid secretion. This Homo sapiens (Human) protein is Ammonium transporter Rh type B.